The chain runs to 81 residues: Cytochrome b559 subunit alpha (81 aa).

The helical transmembrane segment at 21 to 35 (VIHALTIPALFLAGW) threads the bilayer. His23 is a binding site for heme.

It belongs to the PsbE/PsbF family. In terms of assembly, heterodimer of an alpha subunit and a beta subunit. PSII is composed of 1 copy each of membrane proteins PsbA, PsbB, PsbC, PsbD, PsbE, PsbF, PsbH, PsbI, PsbJ, PsbK, PsbL, PsbM, PsbT, PsbX, PsbY, PsbZ, Psb30/Ycf12, peripheral proteins PsbO, CyanoQ (PsbQ), PsbU, PsbV and a large number of cofactors. It forms dimeric complexes. Heme b serves as cofactor.

The protein localises to the cellular thylakoid membrane. This b-type cytochrome is tightly associated with the reaction center of photosystem II (PSII). PSII is a light-driven water:plastoquinone oxidoreductase that uses light energy to abstract electrons from H(2)O, generating O(2) and a proton gradient subsequently used for ATP formation. It consists of a core antenna complex that captures photons, and an electron transfer chain that converts photonic excitation into a charge separation. The chain is Cytochrome b559 subunit alpha from Synechococcus sp. (strain JA-2-3B'a(2-13)) (Cyanobacteria bacterium Yellowstone B-Prime).